The sequence spans 396 residues: Elongation factor Tu (396 aa).

The region spanning 10–206 (KPHVNIGTIG…AVDNYIPEPE (197 aa)) is the tr-type G domain. The tract at residues 19-26 (GHVDHGKT) is G1. GTP is bound at residue 19–26 (GHVDHGKT). Position 26 (threonine 26) interacts with Mg(2+). The G2 stretch occupies residues 60–64 (GITIA). A G3 region spans residues 81–84 (DCPG). GTP-binding positions include 81-85 (DCPGH) and 136-139 (NKAD). The interval 136–139 (NKAD) is G4. Residues 174-176 (SAL) form a G5 region.

The protein belongs to the TRAFAC class translation factor GTPase superfamily. Classic translation factor GTPase family. EF-Tu/EF-1A subfamily. Monomer.

It localises to the cytoplasm. The catalysed reaction is GTP + H2O = GDP + phosphate + H(+). Its function is as follows. GTP hydrolase that promotes the GTP-dependent binding of aminoacyl-tRNA to the A-site of ribosomes during protein biosynthesis. This Geobacter sulfurreducens (strain ATCC 51573 / DSM 12127 / PCA) protein is Elongation factor Tu.